The primary structure comprises 59 residues: Sec-independent protein translocase protein TatA (59 aa).

Residues 1–21 (MFSNIGFPGLILILVAVLILF) traverse the membrane as a helical segment.

It belongs to the TatA/E family. Forms a complex with TatC.

Its subcellular location is the cell membrane. In terms of biological role, part of the twin-arginine translocation (Tat) system that transports large folded proteins containing a characteristic twin-arginine motif in their signal peptide across membranes. TatA could form the protein-conducting channel of the Tat system. The chain is Sec-independent protein translocase protein TatA from Bacillus mycoides (strain KBAB4) (Bacillus weihenstephanensis).